Consider the following 230-residue polypeptide: Phosphatidylserine decarboxylase proenzyme (230 aa).

Catalysis depends on serine 186, which acts as the Schiff-base intermediate with substrate; via pyruvic acid. Pyruvic acid (Ser); by autocatalysis is present on serine 186.

This sequence belongs to the phosphatidylserine decarboxylase family. PSD-A subfamily. In terms of assembly, heterodimer of a large membrane-associated beta subunit and a small pyruvoyl-containing alpha subunit. Pyruvate is required as a cofactor. In terms of processing, is synthesized initially as an inactive proenzyme. Formation of the active enzyme involves a self-maturation process in which the active site pyruvoyl group is generated from an internal serine residue via an autocatalytic post-translational modification. Two non-identical subunits are generated from the proenzyme in this reaction, and the pyruvate is formed at the N-terminus of the alpha chain, which is derived from the carboxyl end of the proenzyme. The post-translation cleavage follows an unusual pathway, termed non-hydrolytic serinolysis, in which the side chain hydroxyl group of the serine supplies its oxygen atom to form the C-terminus of the beta chain, while the remainder of the serine residue undergoes an oxidative deamination to produce ammonia and the pyruvoyl prosthetic group on the alpha chain.

Its subcellular location is the cell membrane. The catalysed reaction is a 1,2-diacyl-sn-glycero-3-phospho-L-serine + H(+) = a 1,2-diacyl-sn-glycero-3-phosphoethanolamine + CO2. The protein operates within phospholipid metabolism; phosphatidylethanolamine biosynthesis; phosphatidylethanolamine from CDP-diacylglycerol: step 2/2. Its function is as follows. Catalyzes the formation of phosphatidylethanolamine (PtdEtn) from phosphatidylserine (PtdSer). This chain is Phosphatidylserine decarboxylase proenzyme, found in Wolbachia sp. subsp. Brugia malayi (strain TRS).